The sequence spans 91 residues: Small ribosomal subunit protein uS19 (91 aa).

The protein belongs to the universal ribosomal protein uS19 family.

In terms of biological role, protein S19 forms a complex with S13 that binds strongly to the 16S ribosomal RNA. The protein is Small ribosomal subunit protein uS19 of Prochlorococcus marinus (strain MIT 9303).